We begin with the raw amino-acid sequence, 292 residues long: 11-beta-hydroxysteroid dehydrogenase 1 (292 aa).

The Cytoplasmic segment spans residues 1–7 (MAFMKKY). Residues 8 to 24 (LLPILGLFMAYYYYSAN) form a helical; Signal-anchor for type II membrane protein membrane-spanning segment. Over 25–292 (EEFRPEMLQG…SYNMDRFINK (268 aa)) the chain is Lumenal. NADP(+) is bound by residues 41 to 67 (GASKGIGREMAYHLAKMGAHVVVTARS), 92 to 93 (TM), and 119 to 121 (NHI). N123 and N162 each carry an N-linked (GlcNAc...) asparagine glycan. S170 is a binding site for substrate. Y183 serves as the catalytic Proton acceptor. An NADP(+)-binding site is contributed by 183–187 (YSASK). N207 carries N-linked (GlcNAc...) asparagine glycosylation. 218-222 (IDTET) is a binding site for NADP(+).

The protein belongs to the short-chain dehydrogenases/reductases (SDR) family. In terms of assembly, homodimer. Post-translationally, glycosylated. In terms of tissue distribution, widely expressed, highest expression in liver, lower in testis, ovary, lung, foreskin fibroblasts, and much lower in kidney. Expressed in liver (at protein level). Expressed in the basal cells of the corneal epithelium and in the ciliary nonpigmented epithelium (both at mRNA and at protein level).

Its subcellular location is the endoplasmic reticulum membrane. The enzyme catalyses an 11beta-hydroxysteroid + NADP(+) = an 11-oxosteroid + NADPH + H(+). It carries out the reaction cortisone + NADPH + H(+) = cortisol + NADP(+). The catalysed reaction is corticosterone + NADP(+) = 11-dehydrocorticosterone + NADPH + H(+). It catalyses the reaction a 7beta-hydroxysteroid + NADP(+) = a 7-oxosteroid + NADPH + H(+). The enzyme catalyses 7-oxocholesterol + NADPH + H(+) = 7beta-hydroxycholesterol + NADP(+). It carries out the reaction chenodeoxycholate + NADP(+) = 7-oxolithocholate + NADPH + H(+). The catalysed reaction is 7-oxolithocholate + NADPH + H(+) = ursodeoxycholate + NADP(+). It catalyses the reaction glycochenodeoxycholate + NADP(+) = 7-oxoglycolithocholate + NADPH + H(+). The enzyme catalyses taurochenodeoxycholate + NADP(+) = 7-oxotaurolithocholate + NADPH + H(+). It carries out the reaction tauroursodeoxycholate + NADP(+) = 7-oxotaurolithocholate + NADPH + H(+). The catalysed reaction is glycoursodeoxycholate + NADP(+) = 7-oxoglycolithocholate + NADPH + H(+). It catalyses the reaction 7-oxopregnenolone + NADPH + H(+) = 7beta-hydroxypregnenolone + NADP(+). The enzyme catalyses 3beta,7alpha-dihydroxyandrost-5-en-17-one + NADP(+) = 3beta-hydroxy-5-androstene-7,17-dione + NADPH + H(+). It carries out the reaction 3beta-hydroxy-5-androstene-7,17-dione + NADPH + H(+) = 3beta,7beta-dihydroxyandrost-5-en-17-one + NADP(+). The catalysed reaction is 3beta-hydroxy-5alpha-androstane-7,17-dione + NADPH + H(+) = 3beta,7beta-dihydroxy-5alpha-androstan-17-one + NADP(+). Its pathway is steroid metabolism. With respect to regulation, hexose-6-phosphate dehydrogenase (H6PD) provides cosubstrate NADPH, and the glucose-6-phosphate transporter in the ER-membrane supplies the substrate for H6PDH, their activities stimulate the reduction of cortisone and abolish the oxidation of cortisol. In terms of biological role, controls the reversible conversion of biologically active glucocorticoids such as cortisone to cortisol, and 11-dehydrocorticosterone to corticosterone in the presence of NADP(H). Participates in the corticosteroid receptor-mediated anti-inflammatory response, as well as metabolic and homeostatic processes. Plays a role in the secretion of aqueous humor in the eye, maintaining a normotensive, intraocular environment. Bidirectional in vitro, predominantly functions as a reductase in vivo, thereby increasing the concentration of active glucocorticoids. It has broad substrate specificity, besides glucocorticoids, it accepts other steroid and sterol substrates. Interconverts 7-oxo- and 7-hydroxy-neurosteroids such as 7-oxopregnenolone and 7beta-hydroxypregnenolone, 7-oxodehydroepiandrosterone (3beta-hydroxy-5-androstene-7,17-dione) and 7beta-hydroxydehydroepiandrosterone (3beta,7beta-dihydroxyandrost-5-en-17-one), among others. Catalyzes the stereo-specific conversion of the major dietary oxysterol, 7-ketocholesterol (7-oxocholesterol), into the more polar 7-beta-hydroxycholesterol metabolite. 7-oxocholesterol is one of the most important oxysterols, it participates in several events such as induction of apoptosis, accumulation in atherosclerotic lesions, lipid peroxidation, and induction of foam cell formation. Mediates the 7-oxo reduction of 7-oxolithocholate mainly to chenodeoxycholate, and to a lesser extent to ursodeoxycholate, both in its free form and when conjugated to glycine or taurine, providing a link between glucocorticoid activation and bile acid metabolism. Catalyzes the synthesis of 7-beta-25-dihydroxycholesterol from 7-oxo-25-hydroxycholesterol in vitro, which acts as a ligand for the G-protein-coupled receptor (GPCR) Epstein-Barr virus-induced gene 2 (EBI2) and may thereby regulate immune cell migration. The protein is 11-beta-hydroxysteroid dehydrogenase 1 of Homo sapiens (Human).